The chain runs to 380 residues: Fibromodulin (380 aa).

The signal sequence occupies residues 1–18 (MRWANILLVAGLCRASLG). An LRRNT domain is found at 71–109 (EAQQASSWQCPQECDCPPNFSSAMYCDTRNLRYLPFVPT). Asn89 carries N-linked (GlcNAc...) asparagine glycosylation. LRR repeat units follow at residues 110-131 (RMKY…AFDN), 134-147 (ELEW…QISS), 160-180 (NLER…PLPR), 181-202 (SLRE…ALEG), 205-227 (NLTA…KGLK), 228-248 (SLIL…GLPM), 249-270 (ALEQ…YFKV), and 273-293 (KLLY…STNT). Asn131 is a glycosylation site (N-linked (GlcNAc...) (keratan sulfate) asparagine). N-linked (GlcNAc...) (keratan sulfate) asparagine glycosylation is present at Asn170. N-linked (GlcNAc...) (keratan sulfate) asparagine glycosylation is present at Asn205. N-linked (GlcNAc...) (keratan sulfate) asparagine glycosylation occurs at Asn295. LRR repeat units lie at residues 298–317 (SILE…RVST) and 318–339 (NLEN…SFCT). Cys338 and Cys371 are oxidised to a cystine. The N-linked (GlcNAc...) asparagine glycan is linked to Asn345. The LRR 11 repeat unit spans residues 348-371 (RLQVLRLDGNEIKRNAMPPDAPLC).

The protein belongs to the small leucine-rich proteoglycan (SLRP) family. SLRP class II subfamily. In terms of assembly, binds to type I and type II collagen. Post-translationally, binds keratan sulfate chains.

Its subcellular location is the secreted. The protein localises to the extracellular space. It is found in the extracellular matrix. Functionally, affects the rate of fibrils formation. May have a primary role in collagen fibrillogenesis. The polypeptide is Fibromodulin (FMOD) (Gallus gallus (Chicken)).